The following is a 507-amino-acid chain: Anthranilate synthase component 1 (507 aa).

L-tryptophan is bound at residue Ser65. Ser81 is modified (phosphoserine). Thr223 carries the phosphothreonine modification. 280–282 (PYL) is an L-tryptophan binding site. Residue 316–317 (GT) participates in chorismate binding. Glu343 is a binding site for Mg(2+). Residues Tyr431, Arg452, 466 to 468 (GGG), and Gly468 each bind chorismate. Glu481 serves as a coordination point for Mg(2+).

It belongs to the anthranilate synthase component I family. As to quaternary structure, tetramer of two components I and two components II. It depends on Mg(2+) as a cofactor.

The enzyme catalyses chorismate + L-glutamine = anthranilate + pyruvate + L-glutamate + H(+). It functions in the pathway amino-acid biosynthesis; L-tryptophan biosynthesis; L-tryptophan from chorismate: step 1/5. The polypeptide is Anthranilate synthase component 1 (TRP2) (Saccharomyces cerevisiae (strain ATCC 204508 / S288c) (Baker's yeast)).